A 221-amino-acid polypeptide reads, in one-letter code: Small histidine-alanine-rich protein (221 aa).

Residues 1–21 (MVSFSKNKILSAAVFASVLLL) form the signal peptide. Residues 52-67 (AHAGDAHHAHHVADAH) show a composition bias toward basic and acidic residues. Disordered stretches follow at residues 52–141 (AHAG…AANA) and 180–221 (AHHD…HLHH). A run of 2 repeats spans residues 57 to 59 (AHH) and 60 to 62 (AHH). Residues 57–68 (AHHAHHVADAHH) form a 4 X 3 AA approximate tandem repeats of A-H-H region. The stretch at 63–65 (VAD) is one 1-3; approximate repeat. A run of 13 repeats spans residues 66–68 (AHH), 69–74 (AHHAAN), 75–80 (AHHAAN), 81–86 (AHHAAN), 87–92 (AHHAAN), 93–98 (AHHAAN), 99–104 (AHHAAN), 105–110 (AHHAAN), 111–116 (AHHAAN), 117–122 (AHHAAN), 123–128 (AHHAAN), 129–134 (AHHAAN), and 135–140 (AHHAAN). Positions 69 to 146 (AHHAANAHHA…HAANAHHAAD (78 aa)) are 13 X 6 AA approximate tandem repeats of A-H-H-A-A-N. The span at 75–141 (AHHAANAHHA…AANAHHAANA (67 aa)) shows a compositional bias: low complexity. The stretch at 141–146 (AHHAAD) is one 2-13; approximate repeat. 7 repeat units span residues 176–180 (HHDDA), 181–185 (HHDGA), 186–190 (HHDDA), 191–195 (HHDGA), 196–200 (HHDGA), 201–205 (HHDGA), and 206–210 (HHDGA). The tract at residues 176 to 210 (HHDDAHHDGAHHDDAHHDGAHHDGAHHDGAHHDGA) is 7 X 5 AA tandem repeats of H-H-D-[DG]-A. Residues 180-211 (AHHDGAHHDDAHHDGAHHDGAHHDGAHHDGAH) show a composition bias toward basic and acidic residues.

In Plasmodium falciparum (isolate FC27 / Papua New Guinea), this protein is Small histidine-alanine-rich protein.